Consider the following 613-residue polypeptide: Epsin-2 (613 aa).

Residues 11–143 form the ENTH domain; sequence NMMKGYSSTQ…NDEERLREER (133 aa). Disordered stretches follow at residues 140-208, 323-351, and 356-375; these read REER…DDED, TAANMQQQQQQPADFQQPLPTGSNNPFSM, and RQKQEQQHAQLQRQQEEARQ. Residues 148–167 are compositionally biased toward basic residues; it reads RNRRANRAARPRPRRQRTRS. Threonine 165 is subject to Phosphothreonine. At serine 167 the chain carries Phosphoserine. UIM domains lie at 175–194 and 206–225; these read SYQDDLEKALEESRITAQED and DEDPDFQAALQLSKEEEELK. Residues 179 to 188 show a composition bias toward basic and acidic residues; it reads DLEKALEESR. A compositionally biased stretch (low complexity) spans 323–339; that stretch reads TAANMQQQQQQPADFQQ. Polar residues predominate over residues 340-350; that stretch reads PLPTGSNNPFS. Lysine 426 is covalently cross-linked (Glycyl lysine isopeptide (Lys-Gly) (interchain with G-Cter in ubiquitin)). Position 430 is a phosphothreonine (threonine 430). Serine 434 bears the Phosphoserine mark. Phosphothreonine occurs at positions 450, 468, and 470. Positions 471-512 are enriched in polar residues; it reads GTFINSQGTGYKQVTNEPKNNPFLSNQYTGLPSTNIVPTQTG. Residues 471 to 613 form a disordered region; the sequence is GTFINSQGTG…PDQGVSLIDL (143 aa). Residues 526 to 600 are compositionally biased toward low complexity; it reads SPQQNPTGIS…QQQQQQQQQQ (75 aa).

This sequence belongs to the epsin family. Post-translationally, phosphorylated by PRK1.

It is found in the cytoplasm. It localises to the membrane. Functionally, binds to membranes enriched in phosphatidylinositol 3,5-bisphosphate (PtdIns(3,5)P2) and phosphatidylinositol 4,5-bisphosphate (PtdIns(4,5)P2). Required for endocytosis and localization of actin. This is Epsin-2 (ENT2) from Saccharomyces cerevisiae (strain ATCC 204508 / S288c) (Baker's yeast).